The primary structure comprises 354 residues: 3-isopropylmalate dehydrogenase (354 aa).

Position 76-87 (76-87) interacts with NAD(+); the sequence is GPRWDSAKERPE. Residues Arg-94, Arg-104, Arg-130, and Asp-215 each contribute to the substrate site. 3 residues coordinate Mg(2+): Asp-215, Asp-239, and Asp-243. 273–285 lines the NAD(+) pocket; sequence GSAPDIAGKNKAN.

This sequence belongs to the isocitrate and isopropylmalate dehydrogenases family. LeuB type 1 subfamily. In terms of assembly, homodimer. It depends on Mg(2+) as a cofactor. Mn(2+) is required as a cofactor.

It localises to the cytoplasm. The catalysed reaction is (2R,3S)-3-isopropylmalate + NAD(+) = 4-methyl-2-oxopentanoate + CO2 + NADH. The protein operates within amino-acid biosynthesis; L-leucine biosynthesis; L-leucine from 3-methyl-2-oxobutanoate: step 3/4. Its function is as follows. Catalyzes the oxidation of 3-carboxy-2-hydroxy-4-methylpentanoate (3-isopropylmalate) to 3-carboxy-4-methyl-2-oxopentanoate. The product decarboxylates to 4-methyl-2 oxopentanoate. This Bacillus cereus (strain ATCC 10987 / NRS 248) protein is 3-isopropylmalate dehydrogenase.